The chain runs to 985 residues: Alanine--tRNA ligase, mitochondrial (985 aa).

A mitochondrion-targeting transit peptide spans 1-23 (MAASVAAAARRLRRAIRRSPAWR). Residues Arg110, His128, Trp210, and 240-242 (LWN) contribute to the ATP site. Asn242 and Asp265 together coordinate L-alanine. Residue Gly269 coordinates ATP. Residues His632, His636, Cys749, and His753 each contribute to the Zn(2+) site.

It belongs to the class-II aminoacyl-tRNA synthetase family. In terms of assembly, monomer. It depends on Zn(2+) as a cofactor.

Its subcellular location is the mitochondrion. It catalyses the reaction tRNA(Ala) + L-alanine + ATP = L-alanyl-tRNA(Ala) + AMP + diphosphate. It carries out the reaction (S)-lactate + ATP + H(+) = (S)-lactoyl-AMP + diphosphate. The enzyme catalyses (S)-lactoyl-AMP + L-lysyl-[protein] = N(6)-[(S)-lactoyl]-L-lysyl-[protein] + AMP + 2 H(+). Catalyzes the attachment of alanine to tRNA(Ala) in a two-step reaction: alanine is first activated by ATP to form Ala-AMP and then transferred to the acceptor end of tRNA(Ala). Also edits incorrectly charged tRNA(Ala) via its editing domain. In presence of high levels of lactate, also acts as a protein lactyltransferase that mediates lactylation of lysine residues in target proteins, such as CGAS. Acts as an inhibitor of cGAS/STING signaling by catalyzing lactylation of CGAS, preventing the formation of liquid-like droplets in which CGAS is activated. This Homo sapiens (Human) protein is Alanine--tRNA ligase, mitochondrial.